The following is a 64-amino-acid chain: Alpha-conotoxin-like Ai1.2 (64 aa).

The first 17 residues, 1–17 (MFTVFLLVVLATTVVSS), serve as a signal peptide directing secretion. Residues 18 to 43 (TSGRRAFRGRNAAAKASGLVGLTDRR) constitute a propeptide that is removed on maturation. Cystine bridges form between Cys46-Cys52 and Cys47-Cys60. Residues 48–50 (SDP) are ser-Xaa-Pro motif, crucial for potent interaction with nAChR. Gly61 is subject to Glycine amide.

Belongs to the conotoxin A superfamily. Expressed by the venom duct.

It localises to the secreted. In terms of biological role, alpha-conotoxins act on postsynaptic membranes, they bind to the nicotinic acetylcholine receptors (nAChR) and thus inhibit them. The chain is Alpha-conotoxin-like Ai1.2 from Conus ammiralis (Admiral cone).